The sequence spans 445 residues: Fibrinogen gamma chain (445 aa).

The first 25 residues, 1–25 (MNWSLQLRSFILCWALLLLSPTGLA), serve as a signal peptide directing secretion. N78 carries N-linked (GlcNAc...) asparagine glycosylation. Residues 170-416 (RIHDTTGKDC…ETTMKIIPFN (247 aa)) enclose the Fibrinogen C-terminal domain. A disulfide bridge connects residues C179 and C208. Positions 344, 346, and 350 each coordinate Ca(2+). The cysteines at positions 352 and 365 are disulfide-linked. A gamma-chain polymerization, binding amino end of another fibrin alpha chain region spans residues 400-422 (TRWYSMKETTMKIIPFNRLSIGD). Q424 participates in a covalent cross-link: Isoglutamyl lysine isopeptide (Gln-Lys) (interchain with K-432). The disordered stretch occupies residues 424–445 (QQHHMGGSKQVSVEHEVDVEYP). S431 is modified (phosphoserine). An Isoglutamyl lysine isopeptide (Lys-Gln) (interchain with Q-424) cross-link involves residue K432. The segment covering 435–445 (SVEHEVDVEYP) has biased composition (basic and acidic residues).

In terms of assembly, heterohexamer; disulfide linked. Contains 2 sets of 3 non-identical chains (alpha, beta and gamma). The 2 heterotrimers are in head to head conformation with the N-termini in a small central domain. Conversion of fibrinogen to fibrin is triggered by thrombin, which cleaves fibrinopeptides A and B from alpha and beta chains, and thus exposes the N-terminal polymerization sites responsible for the formation of the soft clot. The soft clot is converted into the hard clot by factor XIIIA which catalyzes the epsilon-(gamma-glutamyl)lysine cross-linking between gamma chains (stronger) and between alpha chains (weaker) of different monomers.

The protein resides in the secreted. Its function is as follows. Together with fibrinogen alpha (FGA) and fibrinogen beta (FGB), polymerizes to form an insoluble fibrin matrix. Has a major function in hemostasis as one of the primary components of blood clots. In addition, functions during the early stages of wound repair to stabilize the lesion and guide cell migration during re-epithelialization. Was originally thought to be essential for platelet aggregation, based on in vitro studies using anticoagulated blood. However, subsequent studies have shown that it is not absolutely required for thrombus formation in vivo. Enhances expression of SELP in activated platelets via an ITGB3-dependent pathway. Maternal fibrinogen is essential for successful pregnancy. Fibrin deposition is also associated with infection, where it protects against IFNG-mediated hemorrhage. May also facilitate the antibacterial immune response via both innate and T-cell mediated pathways. The chain is Fibrinogen gamma chain (Fgg) from Rattus norvegicus (Rat).